Reading from the N-terminus, the 364-residue chain is tRNA 2-selenouridine synthase (364 aa).

Residues L14–I137 form the Rhodanese domain. The S-selanylcysteine intermediate role is filled by C97.

It belongs to the SelU family. In terms of assembly, monomer.

The enzyme catalyses 5-methylaminomethyl-2-thiouridine(34) in tRNA + selenophosphate + (2E)-geranyl diphosphate + H2O + H(+) = 5-methylaminomethyl-2-selenouridine(34) in tRNA + (2E)-thiogeraniol + phosphate + diphosphate. The catalysed reaction is 5-methylaminomethyl-2-thiouridine(34) in tRNA + (2E)-geranyl diphosphate = 5-methylaminomethyl-S-(2E)-geranyl-thiouridine(34) in tRNA + diphosphate. It carries out the reaction 5-methylaminomethyl-S-(2E)-geranyl-thiouridine(34) in tRNA + selenophosphate + H(+) = 5-methylaminomethyl-2-(Se-phospho)selenouridine(34) in tRNA + (2E)-thiogeraniol. It catalyses the reaction 5-methylaminomethyl-2-(Se-phospho)selenouridine(34) in tRNA + H2O = 5-methylaminomethyl-2-selenouridine(34) in tRNA + phosphate. Functionally, involved in the post-transcriptional modification of the uridine at the wobble position (U34) of tRNA(Lys), tRNA(Glu) and tRNA(Gln). Catalyzes the conversion of 2-thiouridine (S2U-RNA) to 2-selenouridine (Se2U-RNA). Acts in a two-step process involving geranylation of 2-thiouridine (S2U) to S-geranyl-2-thiouridine (geS2U) and subsequent selenation of the latter derivative to 2-selenouridine (Se2U) in the tRNA chain. The protein is tRNA 2-selenouridine synthase of Escherichia coli O127:H6 (strain E2348/69 / EPEC).